Reading from the N-terminus, the 434-residue chain is Methylenetetrahydrofolate--tRNA-(uracil-5-)-methyltransferase TrmFO (434 aa).

Residue 10-15 (GAGLAG) coordinates FAD.

The protein belongs to the MnmG family. TrmFO subfamily. FAD serves as cofactor.

It localises to the cytoplasm. The enzyme catalyses uridine(54) in tRNA + (6R)-5,10-methylene-5,6,7,8-tetrahydrofolate + NADH + H(+) = 5-methyluridine(54) in tRNA + (6S)-5,6,7,8-tetrahydrofolate + NAD(+). It carries out the reaction uridine(54) in tRNA + (6R)-5,10-methylene-5,6,7,8-tetrahydrofolate + NADPH + H(+) = 5-methyluridine(54) in tRNA + (6S)-5,6,7,8-tetrahydrofolate + NADP(+). Functionally, catalyzes the folate-dependent formation of 5-methyl-uridine at position 54 (M-5-U54) in all tRNAs. The sequence is that of Methylenetetrahydrofolate--tRNA-(uracil-5-)-methyltransferase TrmFO from Bacillus mycoides (strain KBAB4) (Bacillus weihenstephanensis).